Reading from the N-terminus, the 462-residue chain is ATP synthase subunit beta (462 aa).

Position 150 to 157 (150 to 157 (GGAGVGKT)) interacts with ATP.

This sequence belongs to the ATPase alpha/beta chains family. As to quaternary structure, F-type ATPases have 2 components, CF(1) - the catalytic core - and CF(0) - the membrane proton channel. CF(1) has five subunits: alpha(3), beta(3), gamma(1), delta(1), epsilon(1). CF(0) has three main subunits: a(1), b(2) and c(9-12). The alpha and beta chains form an alternating ring which encloses part of the gamma chain. CF(1) is attached to CF(0) by a central stalk formed by the gamma and epsilon chains, while a peripheral stalk is formed by the delta and b chains. In this bacterium the a and b subunits are transcribed but do not seem to be translated, thus the ATP synthase consists of the alpha, beta, gamma, delta, epsilon and c subunits.

It is found in the cell membrane. The catalysed reaction is ATP + H2O + 4 H(+)(in) = ADP + phosphate + 5 H(+)(out). In terms of biological role, produces ATP from ADP in the presence of a proton gradient across the membrane. The catalytic sites are hosted primarily by the beta subunits. This chain is ATP synthase subunit beta, found in Moorella thermoacetica (strain ATCC 39073 / JCM 9320).